Reading from the N-terminus, the 403-residue chain is Phosphoglycerate kinase (403 aa).

Substrate-binding positions include 21 to 23 (DFN), arginine 36, 59 to 62 (HLGR), arginine 119, and arginine 159. Residues lysine 214, glycine 301, glutamate 332, and 359–362 (GGDS) contribute to the ATP site.

This sequence belongs to the phosphoglycerate kinase family. Monomer.

The protein localises to the cytoplasm. It carries out the reaction (2R)-3-phosphoglycerate + ATP = (2R)-3-phospho-glyceroyl phosphate + ADP. Its pathway is carbohydrate degradation; glycolysis; pyruvate from D-glyceraldehyde 3-phosphate: step 2/5. The sequence is that of Phosphoglycerate kinase from Lactobacillus delbrueckii subsp. lactis.